A 90-amino-acid chain; its full sequence is Acylphosphatase (90 aa).

One can recognise an Acylphosphatase-like domain in the interval glutamine 3–arginine 90. Catalysis depends on residues arginine 18 and asparagine 36.

It belongs to the acylphosphatase family.

The catalysed reaction is an acyl phosphate + H2O = a carboxylate + phosphate + H(+). The chain is Acylphosphatase (acyP) from Actinobacillus succinogenes (strain ATCC 55618 / DSM 22257 / CCUG 43843 / 130Z).